Reading from the N-terminus, the 137-residue chain is Nucleoside diphosphate kinase (137 aa).

ATP-binding residues include Lys9, Phe57, Arg85, Thr91, Arg102, and Asn112. Catalysis depends on His115, which acts as the Pros-phosphohistidine intermediate.

It belongs to the NDK family. Homotetramer. Mg(2+) serves as cofactor.

It is found in the cytoplasm. It catalyses the reaction a 2'-deoxyribonucleoside 5'-diphosphate + ATP = a 2'-deoxyribonucleoside 5'-triphosphate + ADP. The catalysed reaction is a ribonucleoside 5'-diphosphate + ATP = a ribonucleoside 5'-triphosphate + ADP. Its function is as follows. Major role in the synthesis of nucleoside triphosphates other than ATP. The ATP gamma phosphate is transferred to the NDP beta phosphate via a ping-pong mechanism, using a phosphorylated active-site intermediate. The chain is Nucleoside diphosphate kinase from Campylobacter hominis (strain ATCC BAA-381 / DSM 21671 / CCUG 45161 / LMG 19568 / NCTC 13146 / CH001A).